A 576-amino-acid polypeptide reads, in one-letter code: Arginine--tRNA ligase (576 aa).

The 'HIGH' region motif lies at 132-142; the sequence is ANPTGPMHIGH.

This sequence belongs to the class-I aminoacyl-tRNA synthetase family. In terms of assembly, monomer.

The protein localises to the cytoplasm. It catalyses the reaction tRNA(Arg) + L-arginine + ATP = L-arginyl-tRNA(Arg) + AMP + diphosphate. The protein is Arginine--tRNA ligase of Ehrlichia chaffeensis (strain ATCC CRL-10679 / Arkansas).